A 387-amino-acid polypeptide reads, in one-letter code: MLQRIYLDNNATTRIDPKVKEIMDPFLRDHYGNPSSLHQFGTETHPAIAEALDKLYKGINARDIDDVIITSCATESNNWVLKGVYFDECLKKGKNHIVTTVTEHPAVRSTCNFLESLGVEVTYLPINEHGSITAEQVKEAITEKTALVSVMWANNETGLIFPIEEIGAICKEKGVLFHTDAVQAIGKIPVDVLKANVDFLSFSAHKFHGPKGIGGLYIRSGVGLTPLFHGGEHMNGRRSGTLNVPYIVGMGEAMKLAVEHLDYEKEVVGKLRDKLEEALLKIPDVMVVGDRIHRVPNTTLISVRGIEGEAMLWDLNRSNIAASTGSACASEDLEANPVMVAIGASKELAHTAIRLSLSRFNTEAEIDKTIEVFSQAATRLRNISSSY.

Pyridoxal 5'-phosphate-binding positions include 73-74, Asn-155, Gln-183, and 203-205; these read AT and SAH. N6-(pyridoxal phosphate)lysine is present on Lys-206. Thr-241 serves as a coordination point for pyridoxal 5'-phosphate. The active-site Cysteine persulfide intermediate is Cys-328. A [2Fe-2S] cluster-binding site is contributed by Cys-328.

The protein belongs to the class-V pyridoxal-phosphate-dependent aminotransferase family. NifS/IscS subfamily. Homodimer. Forms a heterotetramer with IscU, interacts with other sulfur acceptors. It depends on pyridoxal 5'-phosphate as a cofactor.

It localises to the cytoplasm. It catalyses the reaction (sulfur carrier)-H + L-cysteine = (sulfur carrier)-SH + L-alanine. It functions in the pathway cofactor biosynthesis; iron-sulfur cluster biosynthesis. Its function is as follows. Master enzyme that delivers sulfur to a number of partners involved in Fe-S cluster assembly, tRNA modification or cofactor biosynthesis. Catalyzes the removal of elemental sulfur atoms from cysteine to produce alanine. Functions as a sulfur delivery protein for Fe-S cluster synthesis onto IscU, an Fe-S scaffold assembly protein, as well as other S acceptor proteins. The polypeptide is Cysteine desulfurase IscS (Helicobacter pylori (strain Shi470)).